The sequence spans 279 residues: DegV domain-containing protein SP_1112 (279 aa).

In terms of domain architecture, DegV spans 4 to 277; the sequence is IKIVTDSSVT…ENAWAILIRY (274 aa). Residues threonine 62 and serine 94 each contribute to the hexadecanoate site.

Functionally, may bind long-chain fatty acids, such as palmitate, and may play a role in lipid transport or fatty acid metabolism. This chain is DegV domain-containing protein SP_1112, found in Streptococcus pneumoniae serotype 4 (strain ATCC BAA-334 / TIGR4).